Here is a 146-residue protein sequence, read N- to C-terminus: MTLGSGGSSVVVPRNFRLLEELERGEKGIGDGTVSYGMDDGDDIYMRSWTGTIIGPHNTVHEGRIYQLKLFCDKDYPEKPPTVRFHSRVNMACVNHETGVVDPKKFGLLANWQREYTMEDILVQLKKEMSTSHNRKLVQPPEGTCF.

The 134-residue stretch at 13 to 146 (PRNFRLLEEL…LVQPPEGTCF (134 aa)) folds into the UBC core domain.

This sequence belongs to the ubiquitin-conjugating enzyme family. In terms of assembly, heterodimer with UBC35 or UBC36. Expressed in roots, shoots, leaves, stems, flowers and pollen.

Functionally, has no ubiquitin ligase activity on its own. The heterodimer with UBC catalyzes the synthesis of non-canonical poly-ubiquitin chains that are linked through 'Lys-63'. This type of poly-ubiquitination does not lead to protein degradation by the proteasome. Mediates transcriptional activation of target genes. May play a role in the control of progress through the cell cycle and differentiation. Involved in the error-free DNA repair pathway and contributes to the survival of cells after DNA damage. This chain is Ubiquitin-conjugating enzyme E2 variant 1D (UEV1D), found in Arabidopsis thaliana (Mouse-ear cress).